A 324-amino-acid chain; its full sequence is Beta-ketoacyl-[acyl-carrier-protein] synthase III (324 aa).

Catalysis depends on residues Cys-112 and His-249. Residues 250-254 (QANRR) form an ACP-binding region. Asn-279 is an active-site residue.

Belongs to the thiolase-like superfamily. FabH family. Homodimer.

It is found in the cytoplasm. It catalyses the reaction malonyl-[ACP] + acetyl-CoA + H(+) = 3-oxobutanoyl-[ACP] + CO2 + CoA. It functions in the pathway lipid metabolism; fatty acid biosynthesis. In terms of biological role, catalyzes the condensation reaction of fatty acid synthesis by the addition to an acyl acceptor of two carbons from malonyl-ACP. Catalyzes the first condensation reaction which initiates fatty acid synthesis and may therefore play a role in governing the total rate of fatty acid production. Possesses both acetoacetyl-ACP synthase and acetyl transacylase activities. Its substrate specificity determines the biosynthesis of branched-chain and/or straight-chain of fatty acids. The polypeptide is Beta-ketoacyl-[acyl-carrier-protein] synthase III (Streptococcus pyogenes serotype M49 (strain NZ131)).